We begin with the raw amino-acid sequence, 399 residues long: Carbamoyl phosphate synthase small chain (399 aa).

A CPSase region spans residues 1 to 206; that stretch reads MTQTIPSPKP…NKGYKTNNDA (206 aa). Residues Ser60, Gly258, and Gly260 each coordinate L-glutamine. The Glutamine amidotransferase type-1 domain maps to 210 to 398; that stretch reads HIVAIDYGIK…FNLIMDYKKT (189 aa). Catalysis depends on Cys287, which acts as the Nucleophile. Leu288, Gln291, Asn329, Gly331, and Phe332 together coordinate L-glutamine. Residues His371 and Glu373 contribute to the active site.

The protein belongs to the CarA family. As to quaternary structure, composed of two chains; the small (or glutamine) chain promotes the hydrolysis of glutamine to ammonia, which is used by the large (or ammonia) chain to synthesize carbamoyl phosphate. Tetramer of heterodimers (alpha,beta)4.

It catalyses the reaction hydrogencarbonate + L-glutamine + 2 ATP + H2O = carbamoyl phosphate + L-glutamate + 2 ADP + phosphate + 2 H(+). The enzyme catalyses L-glutamine + H2O = L-glutamate + NH4(+). Its pathway is amino-acid biosynthesis; L-arginine biosynthesis; carbamoyl phosphate from bicarbonate: step 1/1. It functions in the pathway pyrimidine metabolism; UMP biosynthesis via de novo pathway; (S)-dihydroorotate from bicarbonate: step 1/3. Functionally, small subunit of the glutamine-dependent carbamoyl phosphate synthetase (CPSase). CPSase catalyzes the formation of carbamoyl phosphate from the ammonia moiety of glutamine, carbonate, and phosphate donated by ATP, constituting the first step of 2 biosynthetic pathways, one leading to arginine and/or urea and the other to pyrimidine nucleotides. The small subunit (glutamine amidotransferase) binds and cleaves glutamine to supply the large subunit with the substrate ammonia. The polypeptide is Carbamoyl phosphate synthase small chain (Bartonella henselae (strain ATCC 49882 / DSM 28221 / CCUG 30454 / Houston 1) (Rochalimaea henselae)).